The following is a 437-amino-acid chain: Ribosomal protein uS12 methylthiotransferase RimO (437 aa).

The MTTase N-terminal domain occupies 4–114; that stretch reads PRISFVSLGC…VIEAVHTAIP (111 aa). [4Fe-4S] cluster-binding residues include Cys-13, Cys-49, Cys-78, Cys-145, Cys-149, and Cys-152. Residues 131-369 enclose the Radical SAM core domain; it reads LTPRHYAYLK…MAKQQQISTH (239 aa). Residues 372 to 437 form the TRAM domain; the sequence is KKKIGKRLQV…DAYDLYGIAV (66 aa).

It belongs to the methylthiotransferase family. RimO subfamily. [4Fe-4S] cluster is required as a cofactor.

It is found in the cytoplasm. The catalysed reaction is L-aspartate(89)-[ribosomal protein uS12]-hydrogen + (sulfur carrier)-SH + AH2 + 2 S-adenosyl-L-methionine = 3-methylsulfanyl-L-aspartate(89)-[ribosomal protein uS12]-hydrogen + (sulfur carrier)-H + 5'-deoxyadenosine + L-methionine + A + S-adenosyl-L-homocysteine + 2 H(+). Its function is as follows. Catalyzes the methylthiolation of an aspartic acid residue of ribosomal protein uS12. This chain is Ribosomal protein uS12 methylthiotransferase RimO, found in Bartonella tribocorum (strain CIP 105476 / IBS 506).